Consider the following 137-residue polypeptide: ATP synthase epsilon chain, chloroplastic (137 aa).

This sequence belongs to the ATPase epsilon chain family. In terms of assembly, F-type ATPases have 2 components, CF(1) - the catalytic core - and CF(0) - the membrane proton channel. CF(1) has five subunits: alpha(3), beta(3), gamma(1), delta(1), epsilon(1). CF(0) has three main subunits: a, b and c.

It is found in the plastid. The protein localises to the chloroplast thylakoid membrane. Its function is as follows. Produces ATP from ADP in the presence of a proton gradient across the membrane. The polypeptide is ATP synthase epsilon chain, chloroplastic (Bigelowiella natans (Pedinomonas minutissima)).